The following is a 277-amino-acid chain: Anamorsin homolog (277 aa).

The tract at residues 1-134 (MALQGNVAIL…PFYPEFSDAV (134 aa)) is N-terminal SAM-like domain. The tract at residues 135–191 (SFTSKKQSFESAAIPLAVKSTTTQPIKKWTVLADDFGDDQDDDIIDEDTLLDDTDEV) is linker. 4 residues coordinate [2Fe-2S] cluster: C199, C210, C213, and C215. Positions 199–215 (CGDAVGGKKRACKNCTC) are fe-S binding site A. 4 residues coordinate [4Fe-4S] cluster: C238, C241, C249, and C252. 2 short sequence motifs (cx2C motif) span residues 238–241 (CGNC) and 249–252 (CGSC). The interval 238–252 (CGNCFKGDAFRCGSC) is fe-S binding site B.

It belongs to the anamorsin family. In terms of assembly, monomer. Requires [2Fe-2S] cluster as cofactor. [4Fe-4S] cluster is required as a cofactor.

The protein localises to the cytoplasm. Its subcellular location is the mitochondrion intermembrane space. Functionally, component of the cytosolic iron-sulfur (Fe-S) protein assembly (CIA) machinery. Required for the maturation of extramitochondrial Fe-S proteins. Part of an electron transfer chain functioning in an early step of cytosolic Fe-S biogenesis, facilitating the de novo assembly of a [4Fe-4S] cluster on the cytosolic Fe-S scaffold complex. Electrons are transferred from NADPH via a FAD- and FMN-containing diflavin oxidoreductase. Together with the diflavin oxidoreductase, also required for the assembly of the diferric tyrosyl radical cofactor of ribonucleotide reductase (RNR), probably by providing electrons for reduction during radical cofactor maturation in the catalytic small subunit. The polypeptide is Anamorsin homolog (Phytophthora infestans (strain T30-4) (Potato late blight agent)).